We begin with the raw amino-acid sequence, 156 residues long: Snaclec A3 (156 aa).

The N-terminal stretch at 1 to 23 (MGRSISVSFGLLVVFLSLSGTGA) is a signal peptide. 3 disulfides stabilise this stretch: Cys27/Cys38, Cys55/Cys154, and Cys129/Cys146. The region spanning 34–155 (HEGHCYKVFN…CGQPYRFTCE (122 aa)) is the C-type lectin domain.

It belongs to the snaclec family. Heterodimer; disulfide-linked. As to expression, expressed by the venom gland.

It is found in the secreted. Functionally, interferes with one step of hemostasis (modulation of platelet aggregation, or coagulation cascade, for example). The polypeptide is Snaclec A3 (Macrovipera lebetinus (Levantine viper)).